We begin with the raw amino-acid sequence, 631 residues long: ATP-dependent zinc metalloprotease FtsH (631 aa).

Residues 1–5 (MKKSN) lie on the Cytoplasmic side of the membrane. A helical transmembrane segment spans residues 6 to 26 (PWFVFFWITLLVIVLMFINFA). Topologically, residues 27 to 102 (RQGGNEVELE…LEFSATEKSG (76 aa)) are periplasmic. Residues 103 to 123 (WLGSLLLNWGPVVLLILFCFW) form a helical membrane-spanning segment. Residues 124 to 631 (MMRGMSMGNK…KVINEKVIIS (508 aa)) lie on the Cytoplasmic side of the membrane. 196–203 (GSPGTGKT) contacts ATP. A Zn(2+)-binding site is contributed by histidine 418. Glutamate 419 is a catalytic residue. Zn(2+) is bound by residues histidine 422 and aspartate 494.

It in the central section; belongs to the AAA ATPase family. The protein in the C-terminal section; belongs to the peptidase M41 family. As to quaternary structure, homohexamer. Zn(2+) is required as a cofactor.

It localises to the cell inner membrane. Its function is as follows. Acts as a processive, ATP-dependent zinc metallopeptidase for both cytoplasmic and membrane proteins. Plays a role in the quality control of integral membrane proteins. This Endomicrobium trichonymphae protein is ATP-dependent zinc metalloprotease FtsH.